Consider the following 397-residue polypeptide: Succinyl-diaminopimelate desuccinylase (397 aa).

Histidine 73 lines the Zn(2+) pocket. The active site involves aspartate 75. Aspartate 106 contacts Zn(2+). Glutamate 140 (proton acceptor) is an active-site residue. Positions 141, 169, and 366 each coordinate Zn(2+).

Belongs to the peptidase M20A family. DapE subfamily. In terms of assembly, homodimer. It depends on Zn(2+) as a cofactor. Co(2+) serves as cofactor.

It catalyses the reaction N-succinyl-(2S,6S)-2,6-diaminopimelate + H2O = (2S,6S)-2,6-diaminopimelate + succinate. It participates in amino-acid biosynthesis; L-lysine biosynthesis via DAP pathway; LL-2,6-diaminopimelate from (S)-tetrahydrodipicolinate (succinylase route): step 3/3. Its function is as follows. Catalyzes the hydrolysis of N-succinyl-L,L-diaminopimelic acid (SDAP), forming succinate and LL-2,6-diaminopimelate (DAP), an intermediate involved in the bacterial biosynthesis of lysine and meso-diaminopimelic acid, an essential component of bacterial cell walls. The protein is Succinyl-diaminopimelate desuccinylase of Rhizobium johnstonii (strain DSM 114642 / LMG 32736 / 3841) (Rhizobium leguminosarum bv. viciae).